The sequence spans 121 residues: MTELSITGQQVMPPPACTPPEPFRITTNAPHQMNDASLTPGRRKLQKWLGRVLRIVITDGRVLVGFFNCTDRDANIVLSMCAEYLVEGQEPRLLGNVMVPGQHIVSLSIDEPDPQSSLLVQ.

A Sm domain is found at 40-113 (PGRRKLQKWL…IVSLSIDEPD (74 aa)).

Belongs to the snRNP Sm proteins family. As to quaternary structure, component of the N-terminal acetyltransferase C (NatC) complex, which is composed of Naa35, Sbat/Naa38 and Naa30A. Interacts with Smn and Hez; along with Hez and Vlet, may form an accessory subcomplex involved in SMN complex function.

Its subcellular location is the cytoplasm. It localises to the nucleus. In terms of biological role, auxiliary component of the N-terminal acetyltransferase C (NatC) complex which catalyzes acetylation of N-terminal methionine residues. May have an accessory function in the survival motor neuron (SMN) complex. In Drosophila melanogaster (Fruit fly), this protein is N-alpha-acetyltransferase 38, NatC auxiliary subunit.